Reading from the N-terminus, the 232-residue chain is Glutathione-specific gamma-glutamylcyclotransferase (232 aa).

10-15 provides a ligand contact to substrate; that stretch reads VLGYGS. The Proton acceptor role is filled by Glu-115.

Belongs to the gamma-glutamylcyclotransferase family. ChaC subfamily.

It localises to the cytoplasm. Its subcellular location is the nucleus. It catalyses the reaction glutathione = L-cysteinylglycine + 5-oxo-L-proline. Its function is as follows. Catalyzes the cleavage of glutathione into 5-oxo-L-proline and a Cys-Gly dipeptide. Acts specifically on glutathione, but not on other gamma-glutamyl peptides. Allows utilization of gluthathione through subsequent cleavage of the Cys-Gly dipeptide by Cys-Gly metallodipeptidase DUG1. The protein is Glutathione-specific gamma-glutamylcyclotransferase of Saccharomyces cerevisiae (strain ATCC 204508 / S288c) (Baker's yeast).